The primary structure comprises 291 residues: Nucleotide-binding protein lin2617 (291 aa).

ATP is bound at residue 13 to 20 (GMSGAGKT). A GTP-binding site is contributed by 63–66 (DLRG).

This sequence belongs to the RapZ-like family.

Functionally, displays ATPase and GTPase activities. This Listeria innocua serovar 6a (strain ATCC BAA-680 / CLIP 11262) protein is Nucleotide-binding protein lin2617.